The sequence spans 1238 residues: Chitin synthase 4 (1238 aa).

Disordered stretches follow at residues methionine 1–asparagine 93 and threonine 132–lysine 190. The segment covering threonine 14 to glutamate 34 has biased composition (basic and acidic residues). A glycan (N-linked (GlcNAc...) asparagine) is linked at asparagine 50. Polar residues-rich tracts occupy residues serine 71–aspartate 80 and valine 133–threonine 142. The segment covering arginine 175–lysine 190 has biased composition (basic and acidic residues). Residue asparagine 180 is glycosylated (N-linked (GlcNAc...) asparagine). The next 2 helical transmembrane spans lie at isoleucine 200 to phenylalanine 220 and valine 235 to phenylalanine 255. Residues asparagine 365, asparagine 404, and asparagine 426 are each glycosylated (N-linked (GlcNAc...) asparagine). A helical membrane pass occupies residues valine 487–alanine 507. 2 disordered regions span residues proline 548 to methionine 570 and tyrosine 582 to leucine 606. Polar residues predominate over residues proline 553–glycine 562. N-linked (GlcNAc...) asparagine glycosylation is found at asparagine 617, asparagine 903, and asparagine 1030. The next 3 helical transmembrane spans lie at isoleucine 1062–isoleucine 1082, valine 1087–valine 1107, and tyrosine 1115–alanine 1135.

Belongs to the chitin synthase family. Class IV subfamily. Post-translationally, maximal activity requires trypsin activation, suggesting a zymogenic nature.

The protein resides in the cell membrane. It catalyses the reaction [(1-&gt;4)-N-acetyl-beta-D-glucosaminyl](n) + UDP-N-acetyl-alpha-D-glucosamine = [(1-&gt;4)-N-acetyl-beta-D-glucosaminyl](n+1) + UDP + H(+). With respect to regulation, activity is stimulated by Mg(2+), and is more inhibited by polyoxin D than by nikkomycin. Polymerizes chitin, a structural polymer of the cell wall and septum, by transferring the sugar moiety of UDP-GlcNAc to the non-reducing end of the growing chitin polymer. CHS4 synthesizes a large amount of chitin and appears to play a role in the process of cell separation. CHS4 is particularly well suited for functioning at the higher temperatures associated with its poorly characterized saprophic environment and with human infection. In Exophiala dermatitidis (Black yeast-like fungus), this protein is Chitin synthase 4.